The chain runs to 3423 residues: MKNPKKKSGGFRIVNMLKRGVARVSPFGGLKRLPAGLLLGHGPIRMVLAILAFLRFTAIKPSLGLINRWGSVGKKEAMEIIKKFKKDLAAMLRIINARKEKKRRGTDTSVGIVGLLLTTAMAVEVTRRGNAYYMYLDRSDAGEAISFPTTMGMNKCYIQIMDLGHMCDATMSYECPMLDEGVEPDDVDCWCNTTSTWVVYGTCHHKKGEARRSRRAVTLPSHSTRKLQTRSQTWLESREYTKHLIRVENWIFRNPGFALAAAAIAWLLGSSTSQKVIYLVMILLIAPAYSIRCIGVSNRDFVEGMSGGTWVDVVLEHGGCVTVMAQDKPTVDIELVTTTVSNMAEVRSYCYEASISDMASDSRCPTQGEAYLDKQSDTQYVCKRTLVDRGWGNGCGLFGKGSLVTCAKFACSKKMTGKSIQPENLEYRIMLSVHGSQHSGMIVNDTGHETDENRAKVEITPNSPRAEATLGGFGSLGLDCEPRTGLDFSDLYYLTMNNKHWLVHKEWFHDIPLPWHAGADTGTPHWNNKEALVEFKDAHAKRQTVVVLGSQEGAVHTALAGALEAEMDGAKGRLSSGHLKCRLKMDKLRLKGVSYSLCTAAFTFTKIPAETLHGTVTVEVQYAGTDGPCKVPAQMAVDMQTLTPVGRLITANPVITESTENSKMMLELDPPFGDSYIVIGVGEKKITHHWHRSGSTIGKAFEATVRGAKRMAVLGDTAWDFGSVGGALNSLGKGIHQIFGAAFKSLFGGMSWFSQILIGTLLVWLGLNTKNGSISLMCLALGGVLIFLSTAVSADVGCSVDFSKKETRCGTGVFVYNDVEAWRDRYKYHPDSPRRLAAAVKQAWEDGICGISSVSRMENIMWRSVEGELNAILEENGVQLTVVVGSVKNPMWRGPQRLPVPVNELPHGWKAWGKSYFVRAAKTNNSFVVDGDTLKECPLKHRAWNSFLVEDHGFGVFHTSVWLKVREDYSLECDPAVIGTAAKGKEAVHSDLGYWIESEKNDTWRLKRAHLIEMKTCEWPKSHTLWTDGIEESDLIIPKSLAGPLSHHNTREGYRTQMKGPWHSEELEIRFEECPGTKVHVEETCGTRGPSLRSTTASGRVIEEWCCRECTMPPLSFRAKDGCWYGMEIRPRKEPESNLVRSMVTAGSTDHMDHFSLGVLVILLMVQEGLKKRMTTKIIISTSMAVLVAMILGGFSMSDLAKLAILMGATFAEMNTGGDVAHLALIAAFKVRPALLVSFIFRANWTPRESMLLALASCLLQTAISALEGDLMVPINGFALAWLAIRAMVVPRTDNITLAILAALTPLARGTLLVAWRAGLATCGGFMLLSLKGKGSVKKNLPFVMALGLTAVRLVDPINVVGLLLLTRSGKRSWPPSEVLTAVGLICALAGGFAKADIEMAGPMAAVGLLIVSYVVSGKSVDMYIERAGDITWEKDAEVTGNSPRLDVALDESGDFSLVEDDGPPMREIILKVVLMAICGMNPIAIPFAAGAWYVYVKTGKRSGALWDVPAPKEVKKGETTDGVYRVMTRRLLGSTQVGVGVMQEGVFHTMWHVTKGSALRSGEGRLDPYWGDVKQDLVSYCGPWKLDAAWDGHSEVQLLAVPPGERARNIQTLPGIFKTKDGDIGAVALDYPAGTSGSPILDKCGRVIGLYGNGVVIKNGSYVSAITQGRREEETPVECFEPSMLKKKQLTVLDLHPGAGKTRRVLPEIVREAIKTRLRTVILAPTRVVAAEMEEALRGLPVRYMTTAVNVTHSGTEIVDLMCHATFTSRLLQPIRVPNYNLYIMDEAHFTDPSSIAARGYISTRVEMGEAAAIFMTATPPGTRDAFPDSNSPIMDTEVEVPERAWSSGFDWVTDHSGKTVWFVPSVRNGNEIAACLTKAGKRVIQLSRKTFETEFQKTKHQEWDFVVTTDISEMGANFKADRVIDSRRCLKPVILDGERVILAGPMPVTHASAAQRRGRIGRNPNKPGDEYLYGGGCAETDEDHAHWLEARMLLDNIYLQDGLIASLYRPEADKVAAIEGEFKLRTEQRKTFVELMKRGDLPVWLAYQVASAGITYTDRRWCFDGTTNNTIMEDSVPAEVWTRYGEKRVLKPRWMDARVCSDHAALKSFKEFAAGKRGAAFGVMEALGTLPGHMTERFQEAIDNLAVLMRAETGSRPYKAAAAQLPETLETIMLLGLLGTVSLGIFFVLMRNKGIGKMGFGMVTLGASAWLMWLSEIEPARIACVLIVVFLLLVVLIPEPEKQRSPQDNQMAIIIMVAVGLLGLITANELGWLERTKSDLSHLMGRREEGATIGFSMDIDLRPASAWAIYAALTTFITPAVQHAVTTSYNNYSLMAMATQAGVLFGMGKGMPFYAWDFGVPLLMIGCYSQLTPLTLIVAIILLVAHYMYLIPGLQAAAARAAQKRTAAGIMKNPVVDGIVVTDIDTMTIDPQVEKKMGQVLLIAVAVSSAILSRTAWGWGEAGALITAATSTLWEGSPNKYWNSSTATSLCNIFRGSYLAGASLIYTVTRNAGLVKRRGGGTGETLGEKWKARLNQMSALEFYSYKKSGITEVCREEARRALKDGVATGGHAVSRGSAKLRWLVERGYLQPYGKVIDLGCGRGGWSYYAATIRKVQEVKGYTKGGPGHEEPMLVQSYGWNIVRLKSGVDVFHMAAEPCDTLLCDIGESSSSPEVEEARTLRVLSMVGDWLEKRPGAFCIKVLCPYTSTMMETLERLQRRYGGGLVRVPLSRNSTHEMYWVSGAKSNTIKSVSTTSQLLLGRMDGPRRPVKYEEDVNLGSGTRAVVSCAEAPNMKIIGNRIERIRSEHAETWFFDENHPYRTWAYHGSYEAPTQGSASSLINGVVRLLSKPWDVVTGVTGIAMTDTTPYGQQRVFKEKVDTRVPDPQEGTRQVMSMVSSWLWKELGKHKRPRVCTKEEFINKVRSNAALGAIFEEEKEWKTAVEAVNDPRFWALVDKEREHHLRGECQSCVYNMMGKREKKQGEFGKAKGSRAIWYMWLGARFLEFEALGFLNEDHWMGRENSGGGVEGLGLQRLGYVLEEMSRIPGGRMYADDTAGWDTRISRFDLENEALITNQMEKGHRALALAIIKYTYQNKVVKVLRPAEKGKTVMDIISRQDQRGSGQVVTYALNTFTNLVVQLIRNMEAEEVLEMQDLWLLRRSEKVTNWLQSNGWDRLKRMAVSGDDCVVKPIDDRFAHALRFLNDMGKVRKDTQEWKPSTGWDNWEEVPFCSHHFNKLHLKDGRSIVVPCRHQDELIGRARVSPGAGWSIRETACLAKSYAQMWQLLYFHRRDLRLMANAICSSVPVDWVPTGRTTWSIHGKGEWMTTEDMLVVWNRVWIEENDHMEDKTPVTKWTDIPYLGKREDLWCGSLIGHRPRTTWAENIKNTVNMMRRIIGDEEKYVDYLSTQVRYLGEEGSTPGVL.

The interval 1–25 (MKNPKKKSGGFRIVNMLKRGVARVS) is disordered. At 1–104 (MKNPKKKSGG…INARKEKKRR (104 aa)) the chain is on the cytoplasmic side. The tract at residues 37–72 (LLLGHGPIRMVLAILAFLRFTAIKPSLGLINRWGSV) is hydrophobic; homodimerization of capsid protein C. Residues 105 to 122 (GTDTSVGIVGLLLTTAMA) constitute a propeptide, ER anchor for capsid protein C, removed in mature form by serine protease NS3. A helical transmembrane segment spans residues 105–125 (GTDTSVGIVGLLLTTAMAVEV). Topologically, residues 126 to 249 (TRRGNAYYMY…YTKHLIRVEN (124 aa)) are extracellular. N-linked (GlcNAc...) asparagine; by host glycosylation is present at Asn-192. A helical transmembrane segment spans residues 250-269 (WIFRNPGFALAAAAIAWLLG). At 270–274 (SSTSQ) the chain is on the cytoplasmic side. A helical transmembrane segment spans residues 275 to 290 (KVIYLVMILLIAPAYS). Residues 291-745 (IRCIGVSNRD…HQIFGAAFKS (455 aa)) are Extracellular-facing. A Glycyl lysine isopeptide (Lys-Gly) (interchain with G-Cter in ubiquitin) cross-link involves residue Lys-328. 2 disulfide bridges follow: Cys-350–Cys-406 and Cys-382–Cys-411. The segment at 388 to 401 (DRGWGNGCGLFGKG) is fusion peptide. Asn-444 is a glycosylation site (N-linked (GlcNAc...) asparagine; by host). 2 disulfides stabilise this stretch: Cys-480–Cys-581 and Cys-598–Cys-629. Lys-571 participates in a covalent cross-link: Glycyl lysine isopeptide (Lys-Gly) (interchain with G-Cter in ubiquitin). The chain crosses the membrane as a helical span at residues 746–767 (LFGGMSWFSQILIGTLLVWLGL). Topologically, residues 768–773 (NTKNGS) are cytoplasmic. Residues 774 to 794 (ISLMCLALGGVLIFLSTAVSA) traverse the membrane as a helical segment. The Lumenal segment spans residues 795–1177 (DVGCSVDFSK…EGLKKRMTTK (383 aa)). Intrachain disulfides connect Cys-798–Cys-809, Cys-849–Cys-937, Cys-973–Cys-1017, Cys-1074–Cys-1123, Cys-1085–Cys-1106, and Cys-1107–Cys-1110. 2 N-linked (GlcNAc...) asparagine; by host glycosylation sites follow: Asn-924 and Asn-1001. A helical membrane pass occupies residues 1178–1198 (IIISTSMAVLVAMILGGFSMS). Topologically, residues 1199-1220 (DLAKLAILMGATFAEMNTGGDV) are cytoplasmic. A helical membrane pass occupies residues 1221 to 1241 (AHLALIAAFKVRPALLVSFIF). Over 1242 to 1270 (RANWTPRESMLLALASCLLQTAISALEGD) the chain is Lumenal. A helical membrane pass occupies residues 1271 to 1291 (LMVPINGFALAWLAIRAMVVP). Over 1292–1295 (RTDN) the chain is Cytoplasmic. The helical transmembrane segment at 1296 to 1316 (ITLAILAALTPLARGTLLVAW) threads the bilayer. The Lumenal segment spans residues 1317-1345 (RAGLATCGGFMLLSLKGKGSVKKNLPFVM). Residues 1346–1366 (ALGLTAVRLVDPINVVGLLLL) form a helical membrane-spanning segment. Residues 1367-1373 (TRSGKRS) lie on the Cytoplasmic side of the membrane. A helical transmembrane segment spans residues 1374–1394 (WPPSEVLTAVGLICALAGGFA). The Lumenal segment spans residues 1395 to 1397 (KAD). A helical membrane pass occupies residues 1398 to 1418 (IEMAGPMAAVGLLIVSYVVSG). The Cytoplasmic portion of the chain corresponds to 1419–1472 (KSVDMYIERAGDITWEKDAEVTGNSPRLDVALDESGDFSLVEDDGPPMREIILK). The interval 1425-1464 (IERAGDITWEKDAEVTGNSPRLDVALDESGDFSLVEDDGP) is interacts with and activates NS3 protease. The segment at 1429–1451 (GDITWEKDAEVTGNSPRLDVALD) is disordered. The segment at residues 1473–1493 (VVLMAICGMNPIAIPFAAGAW) is an intramembrane region (helical). Residues 1494 to 2170 (YVYVKTGKRS…KAAAAQLPET (677 aa)) are Lumenal-facing. The Peptidase S7 domain maps to 1503–1680 (SGALWDVPAP…RREEETPVEC (178 aa)). Catalysis depends on charge relay system; for serine protease NS3 activity residues His-1553, Asp-1577, and Ser-1637. The Helicase ATP-binding domain occupies 1683–1839 (PSMLKKKQLT…DSNSPIMDTE (157 aa)). The segment at 1687–1690 (KKKQ) is important for RNA-binding. 1696 to 1703 (LHPGAGKT) contributes to the ATP binding site. The short motif at 1787–1790 (DEAH) is the DEAH box element. The region spanning 1834-2013 (PIMDTEVEVP…GLIASLYRPE (180 aa)) is the Helicase C-terminal domain. N6-acetyllysine; by host is present on Lys-1891. A helical transmembrane segment spans residues 2171-2191 (LETIMLLGLLGTVSLGIFFVL). The Lumenal portion of the chain corresponds to 2192-2195 (MRNK). Residues 2196–2216 (GIGKMGFGMVTLGASAWLMWL) constitute an intramembrane region (helical). Topologically, residues 2217–2218 (SE) are cytoplasmic. Residues 2219-2239 (IEPARIACVLIVVFLLLVVLI) traverse the membrane as a helical segment. Topologically, residues 2240 to 2254 (PEPEKQRSPQDNQMA) are lumenal. The segment at residues 2255–2269 (IIIMVAVGLLGLITA) is an intramembrane region (helical). Residues 2270 to 2307 (NELGWLERTKSDLSHLMGRREEGATIGFSMDIDLRPAS) are Lumenal-facing. An intramembrane region (helical) is located at residues 2308 to 2328 (AWAIYAALTTFITPAVQHAVT). At 2329–2344 (TSYNNYSLMAMATQAG) the chain is on the lumenal side. A helical transmembrane segment spans residues 2345-2365 (VLFGMGKGMPFYAWDFGVPLL). At 2366-2375 (MIGCYSQLTP) the chain is on the cytoplasmic side. A helical transmembrane segment spans residues 2376 to 2396 (LTLIVAIILLVAHYMYLIPGL). At 2397 to 2441 (QAAAARAAQKRTAAGIMKNPVVDGIVVTDIDTMTIDPQVEKKMGQ) the chain is on the lumenal side. The chain crosses the membrane as a helical span at residues 2442 to 2462 (VLLIAVAVSSAILSRTAWGWG). At 2463 to 3423 (EAGALITAAT…GEEGSTPGVL (961 aa)) the chain is on the cytoplasmic side. Residues 2521–2785 (GGGTGETLGE…DVNLGSGTRA (265 aa)) form the mRNA cap 0-1 NS5-type MT domain. GTP is bound at residue 2533 to 2539 (KARLNQM). Residue Ser-2576 coordinates S-adenosyl-L-methionine. A Phosphoserine modification is found at Ser-2576. Lys-2581 (for 2'-O-MTase activity) is an active-site residue. Positions 2597 to 2600 (VIDL) are SUMO-interacting motif (SIM). Residues Gly-2606, Trp-2607, Thr-2624, Lys-2625, His-2630, Glu-2631, Asp-2651, Val-2652, Asp-2666, and Ile-2667 each contribute to the S-adenosyl-L-methionine site. Asp-2666 (for 2'-O-MTase activity) is an active-site residue. Residue 2669-2675 (ESSSSPE) coordinates GTP. Lys-2702 functions as the For 2'-O-MTase activity in the catalytic mechanism. Residue 2733–2735 (RNS) coordinates GTP. The For 2'-O-MTase activity role is filled by Glu-2738. Tyr-2740 lines the S-adenosyl-L-methionine pocket. A Nuclear localization signal (NLS) motif is present at residues 2908 to 2914 (KHKRPRV). Residues Glu-2959, His-2963, Cys-2968, and Cys-2971 each coordinate Zn(2+). The RdRp catalytic domain maps to 3049–3199 (GRMYADDTAG…KPIDDRFAHA (151 aa)). Zn(2+)-binding residues include His-3234, Cys-3250, and Cys-3369.

In the N-terminal section; belongs to the class I-like SAM-binding methyltransferase superfamily. mRNA cap 0-1 NS5-type methyltransferase family. In terms of assembly, homodimer. Interacts with host SERTAD3; this interaction promotes capsid protein C degradation. Interacts with host CAPRIN1; this interaction is probably linked to the inhibition of stress granules formation by the virus. Interacts with host G3BP1; this interaction is probably linked to the inhibition of stress granules formation by the virus. As to quaternary structure, forms heterodimers with envelope protein E in the endoplasmic reticulum and Golgi. Interacts with non-structural protein 2A. Homodimer; in the endoplasmic reticulum and Golgi. Interacts with host TYRO3, AXL and DC-SIGN proteins. Interacts with non-structural protein 2A. Interacts with host HAVCR1; this interaction likely mediates virus attachment to host cell. Interacts with host NCAM1. Interacts with host HSPA5. Interacts with Aedes aegypti SRPN25, APY and venom allergen-1 salivary proteins; the interactions do not affect Zika virus replication in human endothelial cells and keratinocytes. In terms of assembly, homodimer; Homohexamer when secreted. Interacts with host TBK1. Interacts with host USP8. Interacts with envelope protein E. As to quaternary structure, interacts with the structural protein prM/E complex, and the NS2B/NS3 protease complex. Forms a heterodimer with serine protease NS3. May form homooligomers. Interacts with human SPCS1. Interacts with non-structural protein 2A. In terms of assembly, forms a heterodimer with NS2B. Interacts with NS4B. Interacts with unphosphorylated RNA-directed RNA polymerase NS5; this interaction stimulates RNA-directed RNA polymerase NS5 guanylyltransferase activity. Interacts with non-structural protein 2A. Interacts with host SHFL; this interaction promotes NS3 degradation via a lysosome-dependent pathway. Interacts with host CEP63; this interaction disorganizes the centrosome and inhibits host innate immune response. As to quaternary structure, may interact with host ANKLE2; the interaction may cause defects in brain development, such as microcephaly. May interact with host SRPRA and SEC61G. Interacts with serine protease NS3. Interacts with NS1. In terms of assembly, homodimer. Interacts with host STAT2; this interaction inhibits the phosphorylation of the latter, and, when all viral proteins are present (polyprotein), targets STAT2 for degradation. Interacts with host TBK1 and IKBKE; these interactions lead to the inhibition of the host RIG-I signaling pathway. Interacts with host PAF1 complex; the interaction may prevent the recruitment of the host PAF1 complex to interferon-responsive genes, and thus reduces the immune response. Interacts with serine protease NS3. Interacts with host KPNA2. Interacts with host ZSWIM8; this interaction allows STAT2 binding to ZSWIM8 and subsequent proteasomal degradation leading to inhibition of interferon signaling. Post-translationally, specific enzymatic cleavages in vivo yield mature proteins. Cleavages in the lumen of endoplasmic reticulum are performed by host signal peptidase, whereas cleavages in the cytoplasmic side are performed by serine protease NS3. Signal cleavage at the 2K-4B site requires a prior NS3 protease-mediated cleavage at the 4A-2K site. In terms of processing, cleaved in post-Golgi vesicles by a host furin, releasing the mature small envelope protein M, and peptide pr. This cleavage is incomplete as up to 30% of viral particles still carry uncleaved prM. N-glycosylation plays a role in virulence in mammalian and mosquito hosts, but may have no effect on neurovirulence. Post-translationally, ubiquitination by host TRIM7 promotes virus attachment and fusion of the virus and the host endosome membrane. In terms of processing, N-glycosylated. The excreted form is glycosylated, which is required for efficient secretion of the protein from infected cells. Ubiquitination by host TRIM22 leads to proteasomal degradation. Post-translationally, acetylated by host KAT5. Acetylation modulates NS3 RNA-binding and unwinding activities and plays an important positive role for viral replication. In terms of processing, phosphorylated on serines residues. This phosphorylation may trigger NS5 nuclear localization. Sumoylated, required for regulating IFN induced interferon stimulated genes/ISGs.

Its subcellular location is the virion. The protein resides in the host nucleus. The protein localises to the host cytoplasm. It localises to the host perinuclear region. It is found in the secreted. Its subcellular location is the virion membrane. The protein resides in the host endoplasmic reticulum membrane. The protein localises to the host cell surface. It carries out the reaction a 5'-end (5'-triphosphoguanosine)-ribonucleoside in mRNA + S-adenosyl-L-methionine = a 5'-end (N(7)-methyl 5'-triphosphoguanosine)-ribonucleoside in mRNA + S-adenosyl-L-homocysteine. It catalyses the reaction a 5'-end (N(7)-methyl 5'-triphosphoguanosine)-ribonucleoside in mRNA + S-adenosyl-L-methionine = a 5'-end (N(7)-methyl 5'-triphosphoguanosine)-(2'-O-methyl-ribonucleoside) in mRNA + S-adenosyl-L-homocysteine + H(+). The catalysed reaction is RNA(n) + a ribonucleoside 5'-triphosphate = RNA(n+1) + diphosphate. The enzyme catalyses Selective hydrolysis of -Xaa-Xaa-|-Yaa- bonds in which each of the Xaa can be either Arg or Lys and Yaa can be either Ser or Ala.. It carries out the reaction a ribonucleoside 5'-triphosphate + H2O = a ribonucleoside 5'-diphosphate + phosphate + H(+). It catalyses the reaction ATP + H2O = ADP + phosphate + H(+). Functionally, plays a role in virus budding by binding to the cell membrane and gathering the viral RNA into a nucleocapsid that forms the core of the mature virus particle. During virus entry, may induce genome penetration into the host cytoplasm after hemifusion induced by the surface proteins. Can migrate to the cell nucleus where it modulates host functions. Inhibits the integrated stress response (ISR) in the infected cell. Inhibits RNA silencing by interfering with host Dicer. In terms of biological role, prevents premature fusion activity of envelope proteins in trans-Golgi by binding to envelope protein E at pH 6.0. After virion release in extracellular space, gets dissociated from E dimers. Its function is as follows. Plays a role in host immune defense modulation and protection of envelope protein E during virion synthesis. PrM-E cleavage is inefficient, many virions are only partially matured and immature prM-E proteins could play a role in immune evasion. Contributes to fetal microcephaly in humans. Acts as a chaperone for envelope protein E during intracellular virion assembly by masking and inactivating envelope protein E fusion peptide. prM is the only viral peptide matured by host furin in the trans-Golgi network probably to avoid catastrophic activation of the viral fusion activity in acidic Golgi compartment prior to virion release. Functionally, may play a role in virus budding. Exerts cytotoxic effects by activating a mitochondrial apoptotic pathway through M ectodomain. May display a viroporin activity. Binds to host cell surface receptors and mediates fusion between viral and cellular membranes. Efficient virus attachment to cell is, at least in part, mediated by host HAVCR1 in a cell-type specific manner. In addition, host NCAM1 can also be used as entry receptor. Interaction with host HSPA5 plays an important role in the early stages of infection as well. Envelope protein is synthesized in the endoplasmic reticulum and forms a heterodimer with protein prM. The heterodimer plays a role in virion budding in the ER, and the newly formed immature particle is covered with 60 spikes composed of heterodimers between precursor prM and envelope protein E. The virion is transported to the Golgi apparatus where the low pH causes the dissociation of PrM-E heterodimers and formation of E homodimers. PrM-E cleavage is inefficient, many virions are only partially matured and immature prM-E proteins could play a role in immune evasion. In terms of biological role, plays a role in the inhibition of host RLR-induced interferon-beta activation by targeting TANK-binding kinase 1/TBK1. In addition, recruits the host deubiquitinase USP8 to cleave 'Lys-11'-linked polyubiquitin chains from caspase-1/CASP1 thus inhibiting its proteasomal degradation. In turn, stabilized CASP1 promotes cleavage of cGAS, which inhibits its ability to recognize mitochondrial DNA release and initiate type I interferon signaling. Its function is as follows. Component of the viral RNA replication complex that recruits genomic RNA, the structural protein prM/E complex, and the NS2B/NS3 protease complex to the virion assembly site and orchestrates virus morphogenesis. Also antagonizes the host alpha/beta interferon antiviral response. May disrupt adherens junction formation and thereby impair proliferation of radial cells in the host cortex. Functionally, required cofactor for the serine protease function of NS3. Displays three enzymatic activities: serine protease, NTPase and RNA helicase. NS3 serine protease, in association with NS2B, performs its autocleavage and cleaves the polyprotein at dibasic sites in the cytoplasm: C-prM, NS2A-NS2B, NS2B-NS3, NS3-NS4A, NS4A-2K and NS4B-NS5. NS3 RNA helicase binds RNA and unwinds dsRNA in the 3' to 5' direction. Leads to translation arrest when expressed ex vivo. Disrupts host centrosome organization in a CEP63-dependent manner to degrade host TBK1 and inhibits innate immune response. Inhibits the integrated stress response (ISR) in the infected cell. In terms of biological role, regulates the ATPase activity of the NS3 helicase activity. NS4A allows NS3 helicase to conserve energy during unwinding. Cooperatively with NS4B suppresses the Akt-mTOR pathway and leads to cellular dysregulation. By inhibiting host ANKLE2 functions, may cause defects in brain development, such as microcephaly. Also antagonizes the host MDA5-mediated induction of alpha/beta interferon antiviral response. Leads to translation arrest when expressed ex vivo. Inhibits the integrated stress response (ISR) in the infected cell. Its function is as follows. Functions as a signal peptide for NS4B and is required for the interferon antagonism activity of the latter. Functionally, induces the formation of ER-derived membrane vesicles where the viral replication takes place. Also plays a role in the inhibition of host RLR-induced interferon-beta production at TANK-binding kinase 1/TBK1 level. Cooperatively with NS4A suppresses the Akt-mTOR pathway and leads to cellular dysregulation. Replicates the viral (+) and (-) RNA genome, and performs the capping of genomes in the cytoplasm. Methylates viral RNA cap at guanine N-7 and ribose 2'-O positions. Once sufficient NS5 is expressed, binds to the cap-proximal structure and inhibits further translation of the viral genome. Besides its role in RNA genome replication, also prevents the establishment of a cellular antiviral state by blocking the interferon-alpha/beta (IFN-alpha/beta) signaling pathway. Mechanistically, interferes with host kinases TBK1 and IKKE upstream of interferon regulatory factor 3/IRF3 to inhibit the RIG-I pathway. Also antagonizes type I interferon signaling by targeting STAT2 for degradation by the proteasome thereby preventing activation of JAK-STAT signaling pathway. Mechanistically, acts as a scaffold protein to connect host ZSWIM8/CUL3 ligase complex and STAT2, leading to STAT2 degradation. Within the host nucleus, disrupts host SUMO1 and STAT2 co-localization with PML, resulting in PML degradation. May also reduce immune responses by preventing the recruitment of the host PAF1 complex to interferon-responsive genes. The protein is Genome polyprotein of Zika virus (isolate ZIKV/Human/Cambodia/FSS13025/2010) (ZIKV).